The sequence spans 131 residues: Glycine cleavage system H protein (131 aa).

A Lipoyl-binding domain is found at 24 to 106 (RAIVGVSDHA…YGEGWIMVIE (83 aa)). The residue at position 65 (K65) is an N6-lipoyllysine.

It belongs to the GcvH family. In terms of assembly, the glycine cleavage system is composed of four proteins: P, T, L and H. It depends on (R)-lipoate as a cofactor.

Its function is as follows. The glycine cleavage system catalyzes the degradation of glycine. The H protein shuttles the methylamine group of glycine from the P protein to the T protein. This chain is Glycine cleavage system H protein, found in Xylella fastidiosa (strain Temecula1 / ATCC 700964).